The chain runs to 252 residues: MAAEADSWDADTFEVVEPVAKRLVPAGVAGDRWAGEDEEDDVKDNWDDEEEEEEVKEAEVKQEPKVSEKKKIAEKIKEKEKQQKKKQEELKKRLEAPEEHKELTPEEQLADKLRLKKLQEESDLELAKETFGVNNACGIDAMNPSSKDDFTEFGKLLKEKITQYEKSLHYASFLEALVRDVCISLEIDDLKKITNSLTVLCSEKQKQEKQSKAKKKKKGVVPGGGLKATMKDDLADYGGYDGEYVQEFEDFM.

2 disordered regions span residues 24 to 107 and 209 to 232; these read VPAG…TPEE and KQSK…TMKD. Acidic residues predominate over residues 36 to 56; it reads EDEEDDVKDNWDDEEEEEEVK. Residues 57-107 show a composition bias toward basic and acidic residues; it reads EAEVKQEPKVSEKKKIAEKIKEKEKQQKKKQEELKKRLEAPEEHKELTPEE. Positions 65-130 form a coiled coil; it reads KVSEKKKIAE…ESDLELAKET (66 aa).

The protein belongs to the eIF-3 subunit J family. Component of the eukaryotic translation initiation factor 3 (eIF-3) complex, which is composed of 13 subunits: EIF3A, EIF3B, EIF3C, EIF3D, EIF3E, EIF3F, EIF3G, EIF3H, EIF3I, EIF3J, EIF3K, EIF3L and EIF3M.

The protein resides in the cytoplasm. Component of the eukaryotic translation initiation factor 3 (eIF-3) complex, which is involved in protein synthesis of a specialized repertoire of mRNAs and, together with other initiation factors, stimulates binding of mRNA and methionyl-tRNAi to the 40S ribosome. The eIF-3 complex specifically targets and initiates translation of a subset of mRNAs involved in cell proliferation. The sequence is that of Eukaryotic translation initiation factor 3 subunit J from Gallus gallus (Chicken).